Reading from the N-terminus, the 215-residue chain is Variable small protein 2 (215 aa).

The N-terminal stretch at 1–18 (MRKRISAIIMTLFMVFMS) is a signal peptide. The N-palmitoyl cysteine moiety is linked to residue Cys-19. Residue Cys-19 is the site of S-diacylglycerol cysteine attachment.

The protein belongs to the variable small protein (Vsp) family.

The protein localises to the cell outer membrane. Functionally, the Vlp and Vsp proteins are antigenically distinct proteins, only one vlp or vsp gene is transcriptionally active at any one time. Switching between these genes is a mechanism of host immune response evasion. This chain is Variable small protein 2, found in Borrelia hermsii.